The chain runs to 376 residues: tRNA-specific 2-thiouridylase MnmA (376 aa).

ATP is bound by residues 10–17 (GMSGGVDS) and Met36. The tract at residues 96–98 (NPD) is interaction with target base in tRNA. The Nucleophile role is filled by Cys101. An intrachain disulfide couples Cys101 to Cys198. Gly125 serves as a coordination point for ATP. The interval 148–150 (KDQ) is interaction with tRNA. The active-site Cysteine persulfide intermediate is the Cys198. The interaction with tRNA stretch occupies residues 305–306 (RY).

Belongs to the MnmA/TRMU family.

The protein resides in the cytoplasm. The enzyme catalyses S-sulfanyl-L-cysteinyl-[protein] + uridine(34) in tRNA + AH2 + ATP = 2-thiouridine(34) in tRNA + L-cysteinyl-[protein] + A + AMP + diphosphate + H(+). Functionally, catalyzes the 2-thiolation of uridine at the wobble position (U34) of tRNA, leading to the formation of s(2)U34. The polypeptide is tRNA-specific 2-thiouridylase MnmA (Protochlamydia amoebophila (strain UWE25)).